The primary structure comprises 302 residues: MFMTPDQQDAKKGILLAISAYTMWGIAPIYFKALGAVSALEILSHRVVWSFVLLAVLIHLGRRWRSVVGVVHTPRKFWLLLVTALLVGGNWLIFIWSINANHMLDASLGYYINPLLNVLLGMLFLGERLRKLQWFAVALAAIGVGIQLVVFGSVPIVAIALATSFGFYGLLRKKIQVDAQTGLFLETLFMLPAAAIYLIWLADTPTSDMALNTWQLNLLLVCAGVVTTLPLLCFTGAAARLKLSTLGFFQYIGPSLMFLLAVLVYGEAFTSDKAITFAFIWSALVIFSVDGLKAGHAARRAR.

The next 10 membrane-spanning stretches (helical) occupy residues 13 to 32 (GILL…IYFK), 42 to 64 (ILSH…GRRW), 77 to 96 (FWLL…IFIW), 106 to 125 (ASLG…MLFL), 132 to 150 (LQWF…QLVV), 154 to 171 (VPIV…YGLL), 183 to 202 (LFLE…IWLA), 217 to 239 (NLLL…GAAA), 246 to 265 (LGFF…VLVY), and 275 to 297 (ITFA…AGHA). One can recognise an EamA domain in the interval 22 to 149 (TMWGIAPIYF…AAIGVGIQLV (128 aa)).

It belongs to the EamA transporter family.

Its subcellular location is the cell membrane. This is an uncharacterized protein from Vibrio cholerae serotype O1 (strain ATCC 39315 / El Tor Inaba N16961).